A 270-amino-acid chain; its full sequence is Putative phosphatase YxeH (270 aa).

D8 serves as the catalytic Nucleophile. Residue D8 participates in Mg(2+) binding. M9 serves as a coordination point for phosphate. D10 provides a ligand contact to Mg(2+). Phosphate-binding positions include 42-43 (TG) and K196. D219 is a Mg(2+) binding site. N222 contributes to the phosphate binding site.

It belongs to the HAD-like hydrolase superfamily. Cof family. Mg(2+) serves as cofactor.

This is Putative phosphatase YxeH (yxeH) from Bacillus subtilis (strain 168).